Here is a 185-residue protein sequence, read N- to C-terminus: Homeobox expressed in ES cells 1 (185 aa).

Positions 32–69 are disordered; the sequence is KKDCTTSVRPHRPWTDTCGDSEKGGNPPLHAPDLPSET. Positions 108-167 form a DNA-binding region, homeobox; sequence GRRPRTAFTQNQVEVLENVFRVNCYPGIDIREDLAQKLNLEEDRIQIWFQNRRAKMKRSR.

The protein belongs to the ANF homeobox family. Can form heterodimers with PROP1 in binding to DNA Interacts with TLE1. As to expression, high levels found in the embryonic liver, lower level expression seen in the viscera, amnion and yolk sac.

The protein resides in the nucleus. Its function is as follows. Required for the normal development of the forebrain, eyes and other anterior structures such as the olfactory placodes and pituitary gland. Possible transcriptional repressor. Binds to the palindromic PIII sequence, 5'-AGCTTGAGTCTAATTGAATTAACTGTAC-3'. HESX1 and PROP1 bind as heterodimers on this palindromic site, and, in vitro, HESX1 can antagonize PROP1 activation. This is Homeobox expressed in ES cells 1 (Hesx1) from Mus musculus (Mouse).